The chain runs to 113 residues: Con-Ins G3b (113 aa).

An N-terminal signal peptide occupies residues 1 to 21 (MTTSFYFLLVALGLLLYVCQS). The propeptide occupies 22–29 (SFGNQHTR). Proline 34 is subject to 4-hydroxyproline; partial. Intrachain disulfides connect cysteine 38–cysteine 99, cysteine 50–cysteine 112, and cysteine 98–cysteine 103. Glutamate 41 bears the 4-carboxyglutamate mark. Histidine amide is present on histidine 51. A propeptide spans 52–92 (GKRNDAGKKRGRASPLWQRQGFLSMLKAKRNEAFFLQRDGR) (c peptide). Glutamate 96 carries the post-translational modification 4-carboxyglutamate. 4-hydroxyproline; partial is present on proline 102.

It belongs to the insulin family. Heterodimer of A and B chains; disulfide-linked. In terms of processing, it is noteworthy that in this dimer, in contrast to Con-Ins G1, the chain B is amidated and not the chain A. As to expression, expressed by the venom gland.

The protein localises to the secreted. In terms of biological role, this venom insulin, from a fish-hunting cone snail, facilitates prey capture by rapidly inducing hypoglycemic shock. It is one of the smallest known insulin found in nature and lacks the C-terminal segment of the B chain that, in human insulin, mediates engagement of the insulin receptor (INSR) and assembly of the hormone's hexameric storage form. Despite lacking this segment, it both binds and activates human insulin receptor (long isoform (HIR-B)) with only a 10-fold lower potency. In vivo, intraperitoneal injection of this peptide into zebrafish lowers blood glucose with the same potency than human insulin. In addition, when applied to water, this peptide reduces overall locomotor activity of zebrafish larvae, observed as a significant decrease in the percentage of time spent swimming and movement frequency. The protein is Con-Ins G3b of Conus geographus (Geography cone).